The following is a 409-amino-acid chain: MFVRRFSLRDFRSWDSLTLDLTPGTTVFLGSNGHGKTNVLESLGYLSTLSSHRVSTDAPMIRSGSASAFAGATVVNNGRELTIDVELIEGKSNRARINQSPTRRPREVLGILQSVMFAPEDLSLVRGDPGDRRRYLDELLTSRIPRMAAVRADYDKVLRQRSALLKTAGAALRRGSRGGESDNVLSTLEVWDGHLAAHGAQLLAGRLELVHDLAPHLAESYRSIAPESRPASIRYKSSLGSSLDPEFTDPARISGIDDVAYLEERFHLELAQMRSKEIDRGVCLVGPHRDDLELVLGDSPAKGFASHGESWSFALSLRLAGFALLRADGSDPVLMLDDVFAELDRRRRRALATVAATAEQVLITAAVPEDVPDELEAAKFGVEASDTGDGRISRIVPVGSTDQEVEFDD.

30–37 contacts ATP; the sequence is GSNGHGKT.

The protein belongs to the RecF family.

The protein localises to the cytoplasm. Its function is as follows. The RecF protein is involved in DNA metabolism; it is required for DNA replication and normal SOS inducibility. RecF binds preferentially to single-stranded, linear DNA. It also seems to bind ATP. This Rhodococcus erythropolis (strain PR4 / NBRC 100887) protein is DNA replication and repair protein RecF.